A 503-amino-acid chain; its full sequence is Maturase K (503 aa).

Belongs to the intron maturase 2 family. MatK subfamily.

The protein resides in the plastid. Its subcellular location is the chloroplast. Functionally, usually encoded in the trnK tRNA gene intron. Probably assists in splicing its own and other chloroplast group II introns. The protein is Maturase K of Rosa californica (California wild rose).